We begin with the raw amino-acid sequence, 225 residues long: MERQLKSIAYAFVANDIDVYIPDGESNCIVVTKLVCKDCGQYWHTSLSECYFCGTLNFYLYECNSCGKKYSLTSSSKSCDTDGCNGKLIKRCSNPECISRTNEEIQRATDEQGGVFDLNSSFNVSLNHCVTCGSKENYYKTYRIYSYRTEVEPNIEALREFANNNKLNSDEDVIIIKHLVDNVIHYGYIPYSKLDETTEITTTFSRFSDLVSELFPVNVPPNVTE.

2 C4-type zinc fingers span residues 36 to 53 (CKDC…CYFC) and 63 to 84 (CNSC…TDGC).

As to quaternary structure, heterotetramer of two alpha and two beta subunits. The alpha subunit is believed to be responsible for DNA recognition, while the beta subunit is thought to mediate cleavage. Zn(2+) is required as a cofactor.

It catalyses the reaction Endonucleolytic cleavage of DNA to give specific double-stranded fragments with terminal 5'-phosphates.. A P subtype restriction enzyme that recognizes the double-stranded sequence 5'-CCN(7)GG-3' and cleaves after N-7. The sequence is that of Type II restriction enzyme BslI subunit alpha from Bacillus sp. (strain NEB-606).